The sequence spans 3284 residues: Location of vulva defective 1 (3284 aa).

Residues 1 to 21 (MKKSNFFVLLLLAISAIQIDG) form the signal peptide. Disordered stretches follow at residues 226–326 (ESTS…ITST), 350–505 (TTML…GTNP), 623–702 (VASS…ADST), 827–926 (STSE…ASTE), and 1043–1216 (TTTE…SLAT). Low complexity-rich tracts occupy residues 227 to 326 (STST…ITST) and 350 to 500 (TTML…TTSS). A compositionally biased stretch (low complexity) spans 827–913 (STSEVTSTTS…PSDSSSASDS (87 aa)). The span at 914–926 (MRTTTVDPDASTE) shows a compositional bias: polar residues. Residues 1043–1057 (TTTETPPTTVSSSDD) are compositionally biased toward low complexity. Over residues 1060–1078 (GKTGGTGATGGTGGTGSGG) the composition is skewed to gly residues. Residues 1079–1104 (SATTLSTGDAVRSTTSGSGSGQSSTG) show a composition bias toward low complexity. Positions 1105 to 1127 (SGAGGSGTTASGSGSGGSSGTGS) are enriched in gly residues. Residues 1128-1138 (DGVNSGKTTAL) show a composition bias toward polar residues. A compositionally biased stretch (low complexity) spans 1163 to 1192 (GSGSDSNGSSGVSTKSSSGSDTSGSSDSSG). Residues 1197–1216 (FSATAQPSTRTTKTRSSLAT) are compositionally biased toward polar residues. Residues 2064-2227 (WNNSLQVEII…SVGAFNPTID (164 aa)) enclose the GAIN-B domain. Cysteines 2181 and 2209 form a disulfide. The tract at residues 2181 to 2227 (CYFYQKTSDVFNSEGMYPSDGQGMQFVNCSTDHLTMFSVGAFNPTID) is GPS. A helical transmembrane segment spans residues 2245-2265 (VMIAAVFMLVVYGCLTINAII). Residues 2288–2411 (YMYVIAVETG…GDGETERLAR (124 aa)) enclose the PLAT domain. The next 10 helical transmembrane spans lie at 2453 to 2473 (DYSV…ITIL), 2496 to 2516 (IAFG…HILL), 2557 to 2577 (IIVF…MSLM), 2592 to 2612 (LILW…FLIL), 2672 to 2692 (LFIT…MVML), 2945 to 2965 (MLYI…YLYG), 2994 to 3014 (WNFM…AYTI), 3043 to 3063 (WEIV…CKMI), 3089 to 3109 (FGIA…AVLG), and 3144 to 3164 (FAFV…LQLY).

The protein belongs to the polycystin family. In terms of assembly, interacts (via PLAT domain) with atp-2 (via N-terminus) and with kin-10 (via C-terminus). Interacts (via C-terminus) with isoform a of stam-1/pqn-19 (via C-terminus). Post-translationally, autoproteolytically processed at the GPS region of the GAIN-B domain; this cleavage modulates receptor activity. In terms of tissue distribution, exclusively expressed in a subset of three categories of adult male sensory neurons: ray neurons, hook neurons and head cephalic (CEM) neurons.

The protein resides in the membrane. It localises to the cell projection. It is found in the cilium. Required for two aspects of male mating behavior: response to hermaphrodite contact and vulva location. Acts in the same pathway as pkd-2 and atp-2 in response behavior. May be required for ciliary targeting of pkd-2. The chain is Location of vulva defective 1 (lov-1) from Caenorhabditis elegans.